The sequence spans 319 residues: Cell surface A33 antigen (319 aa).

A signal peptide spans 1–21 (MVGKMWPVLWTLCAVRVTVDA). Residues 22-134 (ISVETPQDVL…LEGNTKSRVR (113 aa)) enclose the Ig-like V-type domain. The Extracellular portion of the chain corresponds to 22-235 (ISVETPQDVL…VAVRSPSMNV (214 aa)). Intrachain disulfides connect Cys-43–Cys-117, Cys-146–Cys-222, and Cys-162–Cys-211. Residues Asn-112, Asn-200, and Asn-223 are each glycosylated (N-linked (GlcNAc...) asparagine). The region spanning 140–227 (PPSKPECGIE…GTQFCNITVA (88 aa)) is the Ig-like C2-type domain. A helical transmembrane segment spans residues 236-256 (ALYVGIAVGVVAALIIIGIII). Over 257-319 (YCCCCRGKDD…GRESPDHLDQ (63 aa)) the chain is Cytoplasmic. 2 stretches are compositionally biased toward basic and acidic residues: residues 267 to 295 (NTED…SRER) and 303 to 319 (QEEQ…HLDQ). Residues 267 to 319 (NTEDKEDARPNREAYEEPPEQLRELSREREEEDDYRQEEQRSTGRESPDHLDQ) are disordered.

Post-translationally, N-glycosylated, contains approximately 8 kDa of N-linked carbohydrate. In terms of processing, palmitoylated. As to expression, expressed in normal gastrointestinal epithelium and in 95% of colon cancers.

It is found in the membrane. In terms of biological role, may play a role in cell-cell recognition and signaling. The chain is Cell surface A33 antigen (GPA33) from Homo sapiens (Human).